A 418-amino-acid polypeptide reads, in one-letter code: UDP-N-acetylglucosamine 1-carboxyvinyltransferase (418 aa).

Phosphoenolpyruvate is bound at residue Lys-22–Asn-23. Arg-92 contacts UDP-N-acetyl-alpha-D-glucosamine. Cys-116 serves as the catalytic Proton donor. Cys-116 is modified (2-(S-cysteinyl)pyruvic acid O-phosphothioketal). UDP-N-acetyl-alpha-D-glucosamine is bound by residues Arg-121 to Leu-125, Asp-305, and Ile-327.

This sequence belongs to the EPSP synthase family. MurA subfamily.

Its subcellular location is the cytoplasm. The catalysed reaction is phosphoenolpyruvate + UDP-N-acetyl-alpha-D-glucosamine = UDP-N-acetyl-3-O-(1-carboxyvinyl)-alpha-D-glucosamine + phosphate. It functions in the pathway cell wall biogenesis; peptidoglycan biosynthesis. Its function is as follows. Cell wall formation. Adds enolpyruvyl to UDP-N-acetylglucosamine. The chain is UDP-N-acetylglucosamine 1-carboxyvinyltransferase from Acidiphilium cryptum (strain JF-5).